We begin with the raw amino-acid sequence, 98 residues long: Plastocyanin (98 aa).

A Plastocyanin-like domain is found at 1-98; the sequence is AAIVKLGGDD…AGMKMTITVQ (98 aa). Cu cation contacts are provided by His-38, Cys-83, His-86, and Met-91.

This sequence belongs to the plastocyanin family. It depends on Cu(2+) as a cofactor.

It is found in the plastid. The protein resides in the chloroplast thylakoid membrane. In terms of biological role, participates in electron transfer between P700 and the cytochrome b6-f complex in photosystem I. This chain is Plastocyanin (PETE), found in Ulva prolifera (Green seaweed).